The chain runs to 586 residues: Isocitrate dehydrogenase kinase/phosphatase (586 aa).

Residues 316–322 (ARGDRGL) and Lys-337 each bind ATP. Residue Asp-372 is part of the active site.

It belongs to the AceK family.

It is found in the cytoplasm. The enzyme catalyses L-seryl-[isocitrate dehydrogenase] + ATP = O-phospho-L-seryl-[isocitrate dehydrogenase] + ADP + H(+). Bifunctional enzyme which can phosphorylate or dephosphorylate isocitrate dehydrogenase (IDH) on a specific serine residue. This is a regulatory mechanism which enables bacteria to bypass the Krebs cycle via the glyoxylate shunt in response to the source of carbon. When bacteria are grown on glucose, IDH is fully active and unphosphorylated, but when grown on acetate or ethanol, the activity of IDH declines drastically concomitant with its phosphorylation. This is Isocitrate dehydrogenase kinase/phosphatase from Anaeromyxobacter dehalogenans (strain 2CP-C).